The chain runs to 256 residues: UPF0246 protein Sbal_1048 (256 aa).

Belongs to the UPF0246 family.

The chain is UPF0246 protein Sbal_1048 from Shewanella baltica (strain OS155 / ATCC BAA-1091).